The primary structure comprises 320 residues: Beta-ketoacyl-[acyl-carrier-protein] synthase III (320 aa).

Active-site residues include C114 and H247. Residues 248 to 252 are ACP-binding; it reads QANRR. N277 is a catalytic residue.

Belongs to the thiolase-like superfamily. FabH family. As to quaternary structure, homodimer.

Its subcellular location is the cytoplasm. The enzyme catalyses malonyl-[ACP] + acetyl-CoA + H(+) = 3-oxobutanoyl-[ACP] + CO2 + CoA. Its pathway is lipid metabolism; fatty acid biosynthesis. Functionally, catalyzes the condensation reaction of fatty acid synthesis by the addition to an acyl acceptor of two carbons from malonyl-ACP. Catalyzes the first condensation reaction which initiates fatty acid synthesis and may therefore play a role in governing the total rate of fatty acid production. Possesses both acetoacetyl-ACP synthase and acetyl transacylase activities. Its substrate specificity determines the biosynthesis of branched-chain and/or straight-chain of fatty acids. This is Beta-ketoacyl-[acyl-carrier-protein] synthase III from Neisseria meningitidis serogroup B (strain ATCC BAA-335 / MC58).